Reading from the N-terminus, the 91-residue chain is MPRSLKKGPFLDLHLLKKVEKAVESGDKKPIKTWSRRSMIIPSMIGLTIAVHNGRQHVPVYVSDEMIGHKLGEFAPTRTYRGHAADKKAKK.

It belongs to the universal ribosomal protein uS19 family.

Its function is as follows. Protein S19 forms a complex with S13 that binds strongly to the 16S ribosomal RNA. This chain is Small ribosomal subunit protein uS19, found in Actinobacillus pleuropneumoniae serotype 7 (strain AP76).